The primary structure comprises 448 residues: Signal recognition particle 54 kDa protein (448 aa).

Residues 107–114, 189–193, and 247–250 each bind GTP; these read GIQGSGKT, DSAGR, and TKLD.

Belongs to the GTP-binding SRP family. SRP54 subfamily. Part of the signal recognition particle protein translocation system, which is composed of SRP and FtsY. Archaeal SRP consists of a 7S RNA molecule of 300 nucleotides and two protein subunits: SRP54 and SRP19.

It localises to the cytoplasm. The catalysed reaction is GTP + H2O = GDP + phosphate + H(+). Its function is as follows. Involved in targeting and insertion of nascent membrane proteins into the cytoplasmic membrane. Binds to the hydrophobic signal sequence of the ribosome-nascent chain (RNC) as it emerges from the ribosomes. The SRP-RNC complex is then targeted to the cytoplasmic membrane where it interacts with the SRP receptor FtsY. The sequence is that of Signal recognition particle 54 kDa protein from Thermococcus onnurineus (strain NA1).